The sequence spans 98 residues: uncharacterized protein (98 aa).

A run of 2 helical transmembrane segments spans residues 2–22 (IVTL…GLWW) and 70–90 (AAKA…LPIL).

It localises to the cell membrane. This is an uncharacterized protein from Sinorhizobium fredii (strain NBRC 101917 / NGR234).